We begin with the raw amino-acid sequence, 378 residues long: Tyrosinase-like protein phomQ1' (378 aa).

Residues 42 to 62 (TIIVVSVITFAAIIGCWVFLS) traverse the membrane as a helical segment. Positions 130 and 139 each coordinate Cu cation. The N-linked (GlcNAc...) asparagine glycan is linked to Asn209. Residues His279 and His305 each coordinate Cu cation.

Belongs to the tyrosinase family. Cu(2+) is required as a cofactor.

The protein localises to the membrane. The protein operates within mycotoxin biosynthesis. Functionally, tyrosinase-like protein; part of the gene cluster that mediates the biosynthesis of the phomopsins, a group of hexapeptide mycotoxins which infects lupins and causes lupinosis disease in livestock. The pathway starts with the processing of the precursor phomA' by several endopeptidases including kexin proteases as well as the cluster-specific S41 family peptidase phomP1 and the oligopeptidase phomG' to produce 10 identical copies of the hexapeptide Tyr-Val-Ile-Pro-Ile-Asp. After being excised from the precursor peptide, the core peptides are cyclized and modified post-translationally by enzymes encoded within the gene cluster. The timing and order of proteolysis of the phomA' precursor and PTMs are still unknown. Two tyrosinase-like enzymes, phomQ1' and phomQ2, catalyze the chlorination and hydroxylation of Tyr, respectively. PhomYb, is proposed to be involved in the construction of the macrocyclic structure. The other 4 ustYa family proteins may be involved in PTMs that generate the unique structure of phomopsin A. PhomYa' is required for the hydroxylation of C-beta of Tyr. PhomYc', phomYd', and phomYe are responsible for the biosynthesis of 2,3-dehydroisoleucine (dIle), 2,3-dehydroaspartic acid (dAsp), and 3,4-dehydroproline (dPro), respectively. While dIle formation by phomYc' is indispensable for the installation of dAsp by phomYd', the order of the other PTMs have not been elucidated yet. Most of the biosynthetic enzymes likely have broad substrate specificity, and thus, there might be a metabolic grid from a precursor to phomopsin A. The enzyme(s) responsible for the biosynthesis of 3,4-dehydrovaline (dVal) have also not been identified yet. Finally, phomM' acts as an S-adenosylmethionine-dependent alpha-N-methyltransferase that catalyzes two successive N-methylation reactions, converting N-desmethyl-phomopsin A to phomopsin A and phomopsin A further to an N,N-dimethylated congener called phomopsin E. The chain is Tyrosinase-like protein phomQ1' from Diaporthe leptostromiformis (Lupinosis disease fungus).